The following is a 212-amino-acid chain: Transcription antitermination protein NusB (212 aa).

Disordered regions lie at residues 1-34 (MSDEQSTPASGRPPRQSRGGLTSTGARKAASKSN) and 169-212 (EHDR…QAAG). Residues 178 to 212 (APAQPAAKADTATDAVADAATDAAAADDAADQAAG) are compositionally biased toward low complexity.

The protein belongs to the NusB family.

Its function is as follows. Involved in transcription antitermination. Required for transcription of ribosomal RNA (rRNA) genes. Binds specifically to the boxA antiterminator sequence of the ribosomal RNA (rrn) operons. The protein is Transcription antitermination protein NusB of Delftia acidovorans (strain DSM 14801 / SPH-1).